We begin with the raw amino-acid sequence, 702 residues long: Translation factor GUF1 homolog, chloroplastic (702 aa).

Positions 1 to 30 are enriched in low complexity; it reads MASAAPASRGAARASTAARDAPFAAAARGP. Residues 1–41 form a disordered region; the sequence is MASAAPASRGAARASTAARDAPFAAAARGPGRFRRDGNGRN. Residues 87 to 283 form the tr-type G domain; it reads SQIRNFSIIA…NIVKMIPPPP (197 aa). GTP is bound by residues 96–103, 162–166, and 216–219; these read AHIDHGKS, DTPGH, and NKID.

Belongs to the TRAFAC class translation factor GTPase superfamily. Classic translation factor GTPase family. LepA subfamily.

It localises to the plastid. Its subcellular location is the chloroplast. It catalyses the reaction GTP + H2O = GDP + phosphate + H(+). In terms of biological role, promotes chloroplast protein synthesis. May act as a fidelity factor of the translation reaction, by catalyzing a one-codon backward translocation of tRNAs on improperly translocated ribosomes. In Micromonas pusilla (strain CCMP1545) (Picoplanktonic green alga), this protein is Translation factor GUF1 homolog, chloroplastic.